Reading from the N-terminus, the 396-residue chain is MTVSIYLAKGRDKALRRRHPWIFSRGIDRIDGKAELGETVEIYANNGEWLARGAFSPQSQIRARVWTFDKNEAIDKDFFVRKLNQAQALRDVLAERDGLTGYRLIAAESDGLPGITIDRYQDYFVCQLLSAGAEATKDLLVEALVECYPDCNIYERSDVSVRKKEGLKQRTGVLHGEEPPESVVIEENGVKISVDIVNGHKTGFYLDQRDSRERACKYVKDKSVLNCFSYTGGFGLYALKGGAKHVINADVSQLALDTAKYNAEINKFDLSKAEFLNADVFKLLREYRDNGTKFDVVIMDPPKFAESKNQLTGACRGYKDINMLAMQILNPGGTLLTYSCSGLMDAGLFQKIVADAALDAHRTVQFIERFEQAADHPLDSAYPEGFYLKGFACRVV.

In terms of domain architecture, PUA spans 2 to 81 (TVSIYLAKGR…EAIDKDFFVR (80 aa)).

This sequence belongs to the methyltransferase superfamily. RlmI family.

The protein localises to the cytoplasm. It carries out the reaction cytidine(1962) in 23S rRNA + S-adenosyl-L-methionine = 5-methylcytidine(1962) in 23S rRNA + S-adenosyl-L-homocysteine + H(+). In terms of biological role, specifically methylates the cytosine at position 1962 (m5C1962) of 23S rRNA. This is Ribosomal RNA large subunit methyltransferase I from Aliivibrio fischeri (strain MJ11) (Vibrio fischeri).